The chain runs to 499 residues: Neuronal acetylcholine receptor subunit alpha-3 (499 aa).

The signal sequence occupies residues 1–25 (MGVVLPPPPLSMLMLVLMLLPVASA). Residues 26 to 244 (SEAEHRLFQY…PLFYTINLII (219 aa)) are Extracellular-facing. Residues Asn49 and Asn166 are each glycosylated (N-linked (GlcNAc...) asparagine). 2 cysteine pairs are disulfide-bonded: Cys153–Cys167 and Cys217–Cys218. The helical transmembrane segment at 245–260 (PCLLISFLTVLVFYLP) threads the bilayer. The Cytoplasmic segment spans residues 261 to 262 (SD). The chain crosses the membrane as a helical span at residues 263 to 279 (CGEKVTLCISVLLSLTV). Residue Glu265 coordinates Na(+). Residues 280-301 (FLLVITETIPSTSLVIPLIGEY) are Extracellular-facing. Residues 302–320 (LLFTMIFVTLSIVITVFVL) form a helical membrane-spanning segment. Topologically, residues 321–468 (NVHYRTPTTH…QDDWKYVAMV (148 aa)) are cytoplasmic. Phosphoserine occurs at positions 407 and 410. A helical transmembrane segment spans residues 469 to 487 (IDRIFLWVFILVCILGTAG). The Extracellular portion of the chain corresponds to 488–499 (LFLQPLMARDDT).

The protein belongs to the ligand-gated ion channel (TC 1.A.9) family. Acetylcholine receptor (TC 1.A.9.1) subfamily. Alpha-3/CHRNA3 sub-subfamily. In terms of assembly, neuronal AChR is composed of two different types of subunits: alpha and beta. CHRNA3/Alpha-3 subunit can be combined to CHRNB2/beta-2 or CHRNB4/beta-4 to give rise to functional receptors. Part of a complex composed of STUB1/CHIP, VCP/p97, CHRNA3, and UBXN2A that modulates the ubiquitination and endoplasmic reticulum-associated degradation (ERAD) of CHRNA3. Within the complex UBXN2A acts as a scaffold protein required for the interaction of CHRNA3 with VCP/p97, this interaction also inhibits CHRNA3 ubiquitination by STUB1/CHIP and subsequently ERAD. Interacts with UBXN2A (via SEP domain), the interaction is required for the interaction of CHRNA3 in the STUB1:VCP:UBXN2A complex. Interacts with RIC3; which is required for proper folding and assembly. Interacts with LYPD6. In terms of processing, ubiquitinated; by STUB1/CHIP and thereafter degraded by the 26S proteosome complex. Expressed in the brain (at protein level).

It is found in the synaptic cell membrane. The protein resides in the cell membrane. The protein localises to the endoplasmic reticulum. It localises to the golgi apparatus. It catalyses the reaction K(+)(in) = K(+)(out). The enzyme catalyses Na(+)(in) = Na(+)(out). The catalysed reaction is Ca(2+)(in) = Ca(2+)(out). Activated by a myriad of ligands such as acetylcholine, cytisine, nicotine, choline and epibatidine. The heteropentamer CHRNA3:CHRNB2 activity is blocked by alpha-conotoxins ImI, ImII, PnIA, GID and MII. The heteropentamer CHRNA3:CHRNB4 activity is blocked by the alpha-conotoxin ImI. Functionally, component of neuronal acetylcholine receptors (nAChRs) that function as pentameric, ligand-gated cation channels with high calcium permeability among other activities. nAChRs are excitatory neurotrasnmitter receptors formed by a collection of nAChR subunits known to mediate synaptic transmission in the nervous system and the neuromuscular junction. Each nAchR subunit confers differential attributes to channel properties, including activation, deactivation and desensitization kinetics, pH sensitivity, cation permeability, and binding to allosteric modulators. CHRNA3 forms heteropentameric neuronal acetylcholine receptors with CHRNA5, CHRNB2 and CHRNB4. CHRNA3:CHRNB4 being predominant in neurons of the autonomic ganglia, it is known as ganglionic nicotinic receptor. CHRNA3:CHRNB4 or CHRNA3:CHRNA5:CHRNB4 play also an important role in the habenulo-interpeduncular tract, modulating the mesolimbic dopamine system and affecting reward circuits and addiction. Hypothalamic CHRNA3:CHRNB4 nAChR activation by nicotine leads to activation of POMC neurons and a decrease in food intake. Also expressed in the urothelium where it modulates reflex bladder activity by increasing intracellular calcium through extracellular influx and basal ATP release. This chain is Neuronal acetylcholine receptor subunit alpha-3 (Chrna3), found in Mus musculus (Mouse).